The sequence spans 402 residues: Formate-dependent phosphoribosylglycinamide formyltransferase (402 aa).

N(1)-(5-phospho-beta-D-ribosyl)glycinamide contacts are provided by residues 23–24 (EL) and glutamate 83. ATP contacts are provided by residues arginine 115, lysine 156, 196-199 (EEFV), and glutamate 204. Residues 120–316 (RLAAEKVGVP…EFAIHARAVL (197 aa)) form the ATP-grasp domain. Residues glutamate 274 and glutamate 287 each contribute to the Mg(2+) site. Residues aspartate 294, lysine 364, and 371–372 (RR) each bind N(1)-(5-phospho-beta-D-ribosyl)glycinamide.

The protein belongs to the PurK/PurT family. As to quaternary structure, homodimer.

The catalysed reaction is N(1)-(5-phospho-beta-D-ribosyl)glycinamide + formate + ATP = N(2)-formyl-N(1)-(5-phospho-beta-D-ribosyl)glycinamide + ADP + phosphate + H(+). Its pathway is purine metabolism; IMP biosynthesis via de novo pathway; N(2)-formyl-N(1)-(5-phospho-D-ribosyl)glycinamide from N(1)-(5-phospho-D-ribosyl)glycinamide (formate route): step 1/1. In terms of biological role, involved in the de novo purine biosynthesis. Catalyzes the transfer of formate to 5-phospho-ribosyl-glycinamide (GAR), producing 5-phospho-ribosyl-N-formylglycinamide (FGAR). Formate is provided by PurU via hydrolysis of 10-formyl-tetrahydrofolate. This Ignicoccus hospitalis (strain KIN4/I / DSM 18386 / JCM 14125) protein is Formate-dependent phosphoribosylglycinamide formyltransferase.